We begin with the raw amino-acid sequence, 386 residues long: G2/mitotic-specific cyclin-B2 (386 aa).

Residues 45-64 are disordered; that stretch reads TNGKVGPSKKPSKASCAQKP.

Belongs to the cyclin family. Cyclin AB subfamily. As to quaternary structure, interacts with the CDK1 protein kinase to form a serine/threonine kinase holoenzyme complex also known as maturation promoting factor (MPF). The cyclin subunit imparts substrate specificity to the complex.

Its function is as follows. Essential for the control of the cell cycle at the G2/M (mitosis) transition. The polypeptide is G2/mitotic-specific cyclin-B2 (ccnb2) (Oryzias luzonensis (Luzon ricefish)).